A 176-amino-acid polypeptide reads, in one-letter code: Transcription factor 21 (176 aa).

The disordered stretch occupies residues 1–84 (MSTGSISDVD…QVQRNAANAR (84 aa)). Residues 31–44 (GTSNESTEDSSNCE) are compositionally biased toward polar residues. One can recognise a bHLH domain in the interval 76–128 (VQRNAANARERARMRVLSKAFSRLKTTLPWVPPDTKLSKLDTLRLASSYIAHL).

As to quaternary structure, efficient DNA binding requires dimerization with another bHLH protein. In terms of tissue distribution, expressed in the cranial paraxial mesoderm from 20 hpf and subsequently becomes restricted to the pharyngeal mesoderm that will form the muscle. Expression in the proepicardial organ is first seen at 40hpf in a cluster of cells between the myocardium and yolk. Also expressed in the developing arches. Expression begins to surround the heart by day 3 of development, and by 96 hpf, expression is restricted to the outer epicardial layer surrounding the myocardium.

It localises to the nucleus. Its function is as follows. Involved in epithelial-mesenchymal interactions in kidney and lung morphogenesis that include epithelial differentiation and branching morphogenesis. The protein is Transcription factor 21 of Danio rerio (Zebrafish).